We begin with the raw amino-acid sequence, 491 residues long: 2,3-bisphosphoglycerate-independent phosphoglycerate mutase (491 aa).

2 residues coordinate Mn(2+): Asp-11 and Ser-61. Ser-61 acts as the Phosphoserine intermediate in catalysis. Residues His-118, 147–148 (RD), Arg-177, Arg-183, 247–250 (RNDR), and Lys-320 contribute to the substrate site. Positions 386, 390, 427, 428, and 445 each coordinate Mn(2+).

The protein belongs to the BPG-independent phosphoglycerate mutase family. In terms of assembly, monomer. Mn(2+) serves as cofactor.

The catalysed reaction is (2R)-2-phosphoglycerate = (2R)-3-phosphoglycerate. It functions in the pathway carbohydrate degradation; glycolysis; pyruvate from D-glyceraldehyde 3-phosphate: step 3/5. Its function is as follows. Catalyzes the interconversion of 2-phosphoglycerate and 3-phosphoglycerate. The sequence is that of 2,3-bisphosphoglycerate-independent phosphoglycerate mutase from Helicobacter pylori (strain ATCC 700392 / 26695) (Campylobacter pylori).